We begin with the raw amino-acid sequence, 260 residues long: Indole-3-glycerol phosphate synthase (260 aa).

The protein belongs to the TrpC family.

It carries out the reaction 1-(2-carboxyphenylamino)-1-deoxy-D-ribulose 5-phosphate + H(+) = (1S,2R)-1-C-(indol-3-yl)glycerol 3-phosphate + CO2 + H2O. The protein operates within amino-acid biosynthesis; L-tryptophan biosynthesis; L-tryptophan from chorismate: step 4/5. The polypeptide is Indole-3-glycerol phosphate synthase (Leifsonia xyli subsp. xyli (strain CTCB07)).